The chain runs to 288 residues: Bifunctional protein FolD (288 aa).

NADP(+) is bound by residues 168–170, threonine 195, and valine 236; that span reads GRG.

Belongs to the tetrahydrofolate dehydrogenase/cyclohydrolase family. As to quaternary structure, homodimer.

It catalyses the reaction (6R)-5,10-methylene-5,6,7,8-tetrahydrofolate + NADP(+) = (6R)-5,10-methenyltetrahydrofolate + NADPH. It carries out the reaction (6R)-5,10-methenyltetrahydrofolate + H2O = (6R)-10-formyltetrahydrofolate + H(+). The protein operates within one-carbon metabolism; tetrahydrofolate interconversion. Catalyzes the oxidation of 5,10-methylenetetrahydrofolate to 5,10-methenyltetrahydrofolate and then the hydrolysis of 5,10-methenyltetrahydrofolate to 10-formyltetrahydrofolate. This is Bifunctional protein FolD from Mycobacterium sp. (strain JLS).